Consider the following 241-residue polypeptide: Small ribosomal subunit protein uS3 (241 aa).

Positions Ile39–Arg107 constitute a KH type-2 domain. The segment at Lys217–Val241 is disordered. Positions Arg230–Val241 are enriched in basic and acidic residues.

The protein belongs to the universal ribosomal protein uS3 family. In terms of assembly, part of the 30S ribosomal subunit. Forms a tight complex with proteins S10 and S14.

Functionally, binds the lower part of the 30S subunit head. Binds mRNA in the 70S ribosome, positioning it for translation. In Bradyrhizobium diazoefficiens (strain JCM 10833 / BCRC 13528 / IAM 13628 / NBRC 14792 / USDA 110), this protein is Small ribosomal subunit protein uS3.